A 464-amino-acid polypeptide reads, in one-letter code: Dihydrolipoyl dehydrogenase (464 aa).

FAD-binding positions include 36 to 44, lysine 53, and alanine 119; that span reads EGAALGGTC. Cysteines 44 and 49 form a disulfide. Residues 184-188, glutamate 207, and 269-272 contribute to the NAD(+) site; these read GGGYI and AVGR. 2 residues coordinate FAD: aspartate 311 and alanine 319. Histidine 443 functions as the Proton acceptor in the catalytic mechanism.

This sequence belongs to the class-I pyridine nucleotide-disulfide oxidoreductase family. Homodimer. FAD is required as a cofactor.

The protein localises to the cytoplasm. The catalysed reaction is N(6)-[(R)-dihydrolipoyl]-L-lysyl-[protein] + NAD(+) = N(6)-[(R)-lipoyl]-L-lysyl-[protein] + NADH + H(+). Functionally, the branched-chain alpha-keto dehydrogenase complex catalyzes the overall conversion of alpha-keto acids to acyl-CoA and CO(2). It contains multiple copies of 3 enzymatic components: branched-chain alpha-keto acid decarboxylase (E1), lipoamide acyltransferase (E2) and lipoamide dehydrogenase (E3). This chain is Dihydrolipoyl dehydrogenase, found in Pseudomonas aeruginosa (strain ATCC 15692 / DSM 22644 / CIP 104116 / JCM 14847 / LMG 12228 / 1C / PRS 101 / PAO1).